The chain runs to 213 residues: Proteasome subunit beta 1 (213 aa).

A propeptide spans 1–18 (MVFIAVFNGVFAMSSLPG) (removed in mature form; by autocatalysis). T19 (nucleophile) is an active-site residue.

Belongs to the peptidase T1B family. In terms of assembly, the 20S proteasome core is composed of 14 alpha and 14 beta subunits that assemble into four stacked heptameric rings, resulting in a barrel-shaped structure. The two inner rings, each composed of seven catalytic beta subunits, are sandwiched by two outer rings, each composed of seven alpha subunits. The catalytic chamber with the active sites is on the inside of the barrel. Has a gated structure, the ends of the cylinder being occluded by the N-termini of the alpha-subunits. Is capped at one or both ends by the proteasome regulatory ATPase, PAN.

It is found in the cytoplasm. The catalysed reaction is Cleavage of peptide bonds with very broad specificity.. With respect to regulation, the formation of the proteasomal ATPase PAN-20S proteasome complex, via the docking of the C-termini of PAN into the intersubunit pockets in the alpha-rings, triggers opening of the gate for substrate entry. Interconversion between the open-gate and close-gate conformations leads to a dynamic regulation of the 20S proteasome proteolysis activity. Its function is as follows. Component of the proteasome core, a large protease complex with broad specificity involved in protein degradation. The sequence is that of Proteasome subunit beta 1 from Staphylothermus marinus (strain ATCC 43588 / DSM 3639 / JCM 9404 / F1).